Here is an 89-residue protein sequence, read N- to C-terminus: Putative regulatory protein MAE_11840 (89 aa).

This sequence belongs to the RemA family.

This chain is Putative regulatory protein MAE_11840, found in Microcystis aeruginosa (strain NIES-843 / IAM M-2473).